The sequence spans 223 residues: Phosphoglycolate phosphatase (223 aa).

The active-site Nucleophile is the Asp10. Asp10 and Asp12 together coordinate Mg(2+). Lys149 is a substrate binding site. Residues Asp172 and Asp176 each coordinate Mg(2+).

This sequence belongs to the archaeal SPP-like hydrolase family. The cofactor is Mg(2+).

It catalyses the reaction 2-phosphoglycolate + H2O = glycolate + phosphate. In terms of biological role, catalyzes the dephosphorylation of 2-phosphoglycolate. The polypeptide is Phosphoglycolate phosphatase (Archaeoglobus fulgidus (strain ATCC 49558 / DSM 4304 / JCM 9628 / NBRC 100126 / VC-16)).